Reading from the N-terminus, the 212-residue chain is U8 snoRNA-decapping enzyme (212 aa).

The tract at residues 1–23 is disordered; sequence MAESRSPDRGAKEDKPRPRNISR. Residues H37, R63, and F70 each contribute to the substrate site. One can recognise a Nudix hydrolase domain in the interval 39 to 187; the sequence is LLHAPSQAKL…IGNSKSQLLY (149 aa). Mn(2+)-binding residues include G72, E89, E93, and E150. A Nudix box motif is present at residues 74–95; that stretch reads FVDTRDISLEEGLKRELEEELG. Residues N180 and Q184 each contribute to the substrate site.

Belongs to the Nudix hydrolase family. NUDT16 subfamily. As to quaternary structure, homodimer. Mg(2+) is required as a cofactor. It depends on Mn(2+) as a cofactor. The cofactor is Co(2+). In terms of tissue distribution, detected in ovary, and at very low levels in epithelial cells (at protein level).

The protein localises to the nucleus. It is found in the nucleolus. The protein resides in the nucleoplasm. Its subcellular location is the cytoplasm. The catalysed reaction is a 5'-end (N(7)-methyl 5'-triphosphoguanosine)-ribonucleoside in mRNA + H2O = N(7)-methyl-GDP + a 5'-end phospho-ribonucleoside in mRNA + 2 H(+). It carries out the reaction IDP + H2O = IMP + phosphate + H(+). The enzyme catalyses dIDP + H2O = dIMP + phosphate + H(+). It catalyses the reaction a 5'-end NAD(+)-phospho-ribonucleoside in mRNA + H2O = a 5'-end phospho-ribonucleoside in mRNA + NAD(+) + H(+). The catalysed reaction is a 5'-end FAD-phospho-ribonucleoside in mRNA + H2O = a 5'-end phospho-adenosine-phospho-ribonucleoside in mRNA + FMN + 2 H(+). It carries out the reaction a 5'-end CoA-ribonucleoside in mRNA + H2O = a 5'-end phospho-adenosine-phospho-ribonucleoside in mRNA + (R)-4'-phosphopantetheine + 2 H(+). RNA-binding and decapping enzyme that catalyzes the cleavage of the cap structure of snoRNAs and mRNAs in a metal-dependent manner. Part of the U8 snoRNP complex that is required for the accumulation of mature 5.8S and 28S rRNA. Has diphosphatase activity and removes m7G and/or m227G caps from U8 snoRNA and leaves a 5'monophosphate on the RNA. Also catalyzes the cleavage of the cap structure on mRNAs. Does not hydrolyze cap analog structures like 7-methylguanosine nucleoside triphosphate (m7GpppG). Also hydrolysis m7G- and m227G U3-capped RNAs but with less efficiencies. Has broad substrate specificity with manganese or cobalt as cofactor and can act on various RNA species. Binds to the U8 snoRNA; metal is not required for RNA-binding. May play a role in the regulation of snoRNAs and mRNAs degradation. Also acts as a phosphatase; hydrolyzes the non-canonical purine nucleotides inosine diphosphate (IDP) and deoxyinosine diphosphate (dITP) as well as guanosine diphosphate (GDP), deoxyguanosine diphosphate (dGDP), xanthine diphosphate (XDP), inosine triphosphate (ITP) and deoxyinosine triphosphate (ITP) to their respective monophosphate derivatives and does not distinguish between the deoxy- and ribose forms. The order of activity with different substrates is IDP &gt; dIDP &gt;&gt; GDP = dGDP &gt; XDP = ITP = dITP. Binds strongly to GTP, ITP and XTP. Participates in the hydrolysis of dIDP/IDP and probably excludes non-canonical purines from RNA and DNA precursor pools, thus preventing their incorporation into RNA and DNA and avoiding chromosomal lesions. Exhibits decapping activity towards NAD-capped RNAs and FAD-capped RNAs. Exhibits decapping activity towards dpCoA-capped RNAs in vitro. This Xenopus laevis (African clawed frog) protein is U8 snoRNA-decapping enzyme (nudt16).